Consider the following 83-residue polypeptide: Mu-theraphotoxin-Hhn2b 2 (83 aa).

The signal sequence occupies residues 1-21; that stretch reads MKASMFLALAGLVLLFVVCYA. Residues 22 to 48 constitute a propeptide that is removed on maturation; the sequence is SESEEKEFPRELISKIFTVDDFKGEER. Disulfide bonds link Cys50–Cys65, Cys57–Cys70, and Cys64–Cys77. Leu81 is subject to Leucine amide.

It belongs to the neurotoxin 10 (Hwtx-1) family. 14 (Hntx-1) subfamily. Monomer. In terms of tissue distribution, expressed by the venom gland.

It is found in the secreted. In terms of biological role, weakly blocks the rat SCN2A/SCN1B (Nav1.2/beta-1) sodium channel (IC(50)=68 uM) and the insect sodium channel para/tipE (IC(50)=4.3 uM), without altering the activation or inactivation kinetics (depressant toxin). The sequence is that of Mu-theraphotoxin-Hhn2b 2 from Cyriopagopus hainanus (Chinese bird spider).